A 222-amino-acid chain; its full sequence is PKHD-type hydroxylase P9301_13621 (222 aa).

One can recognise a Fe2OG dioxygenase domain in the interval 81 to 175 (KIHGIMFTKS…RLVCVGWIES (95 aa)). Residues His-99, Asp-101, and His-156 each coordinate Fe cation. Residue Arg-166 coordinates 2-oxoglutarate.

The cofactor is Fe(2+). L-ascorbate is required as a cofactor.

In Prochlorococcus marinus (strain MIT 9301), this protein is PKHD-type hydroxylase P9301_13621.